The following is a 319-amino-acid chain: 1-aminocyclopropane-1-carboxylate oxidase (319 aa).

Residues Pro-153–Pro-253 form the Fe2OG dioxygenase domain. His-177, Asp-179, and His-234 together coordinate Fe cation.

The protein belongs to the iron/ascorbate-dependent oxidoreductase family. It depends on Fe cation as a cofactor.

It carries out the reaction 1-aminocyclopropane-1-carboxylate + L-ascorbate + O2 = ethene + L-dehydroascorbate + hydrogen cyanide + CO2 + 2 H2O. Its pathway is alkene biosynthesis; ethylene biosynthesis via S-adenosyl-L-methionine; ethylene from S-adenosyl-L-methionine: step 2/2. The chain is 1-aminocyclopropane-1-carboxylate oxidase (ACO) from Actinidia deliciosa (Kiwi).